A 241-amino-acid chain; its full sequence is DNA repair protein RecO (241 aa).

Belongs to the RecO family.

Involved in DNA repair and RecF pathway recombination. This chain is DNA repair protein RecO, found in Roseobacter denitrificans (strain ATCC 33942 / OCh 114) (Erythrobacter sp. (strain OCh 114)).